A 144-amino-acid polypeptide reads, in one-letter code: Monooxygenase ptaG (144 aa).

It belongs to the avfA family.

It functions in the pathway secondary metabolite biosynthesis. Functionally, monooxygenase; part of the gene cluster that mediates the biosynthesis of pestheic acid, a diphenyl ether which is a biosynthetic precursor of the unique chloropupukeananes. The biosynthesis initiates from condensation of acetate and malonate units catalyzed by the non-reducing PKS ptaA. As the ptaA protein is TE/CLC domain-deficient, hydrolysis and Claisen cyclization of the polyketide could be catalyzed by ptaB containing a beta-lactamase domain. The ptaB protein might hydrolyze the thioester bond between the ACP of ptaA and the intermediate to release atrochrysone carboxylic acid, which is spontaneously dehydrated to form endocrocin anthrone. Endocrocin anthrone is then converted to endocrocin, catalyzed by the anthrone oxygenase ptaC. Spontaneous decarboxylation of endocrocin occurs to generate emodin. An O-methyltransferase (ptaH or ptaI) could methylate emodin to form physcion. PtaJ could then catalyze the oxidative cleavage of physcion, and rotation of the intermediate could then afford desmethylisosulochrin. PtaF, a putative NADH-dependent oxidoreductase, might also participate in the oxidative cleavage step. Desmethylisosulochrin is then transformed by another O-methyltransferase (ptaH or ptaI) to form isosulochrin. Chlorination of isosulochrin by ptaM in the cyclohexadienone B ring then produces chloroisosulochrin. PtaE is responsible for the oxidative coupling reactions of both benzophenones isosulochrin and chloroisosulochrin to RES-1214-1 and pestheic acid respectively, regardless of chlorination. This chain is Monooxygenase ptaG, found in Pestalotiopsis fici (strain W106-1 / CGMCC3.15140).